Consider the following 187-residue polypeptide: UPF0301 protein YqgE (187 aa).

The protein belongs to the UPF0301 (AlgH) family.

The chain is UPF0301 protein YqgE from Escherichia fergusonii (strain ATCC 35469 / DSM 13698 / CCUG 18766 / IAM 14443 / JCM 21226 / LMG 7866 / NBRC 102419 / NCTC 12128 / CDC 0568-73).